The primary structure comprises 133 residues: Small ribosomal subunit protein uS8c (133 aa).

Belongs to the universal ribosomal protein uS8 family. In terms of assembly, part of the 30S ribosomal subunit.

It is found in the plastid. The protein localises to the chloroplast. One of the primary rRNA binding proteins, it binds directly to 16S rRNA central domain where it helps coordinate assembly of the platform of the 30S subunit. The protein is Small ribosomal subunit protein uS8c (rps8) of Pyropia yezoensis (Susabi-nori).